The following is a 276-amino-acid chain: Release factor glutamine methyltransferase (276 aa).

S-adenosyl-L-methionine-binding positions include 116–120 (GTGTG), Asp139, Trp167, and Asn182. 182-185 (NPPY) provides a ligand contact to substrate.

This sequence belongs to the protein N5-glutamine methyltransferase family. PrmC subfamily.

It catalyses the reaction L-glutaminyl-[peptide chain release factor] + S-adenosyl-L-methionine = N(5)-methyl-L-glutaminyl-[peptide chain release factor] + S-adenosyl-L-homocysteine + H(+). Functionally, methylates the class 1 translation termination release factors RF1/PrfA and RF2/PrfB on the glutamine residue of the universally conserved GGQ motif. The protein is Release factor glutamine methyltransferase of Pseudomonas aeruginosa (strain ATCC 15692 / DSM 22644 / CIP 104116 / JCM 14847 / LMG 12228 / 1C / PRS 101 / PAO1).